A 312-amino-acid polypeptide reads, in one-letter code: Olfactory receptor 5J2 (312 aa).

At 1 to 25 (MADDNFTVVTEFILLGLTDHAELKA) the chain is on the extracellular side. N-linked (GlcNAc...) asparagine glycosylation occurs at asparagine 5. The chain crosses the membrane as a helical span at residues 26–46 (VLFVVFLVIYAITLLRNLGMI). At 47–54 (LLIQITSK) the chain is on the cytoplasmic side. The helical transmembrane segment at 55–75 (LHTPMYFLLSCLSFVDACYSS) threads the bilayer. At 76 to 99 (AIAPKMLVNLLVVKATISFSACMV) the chain is on the extracellular side. Cysteine 97 and cysteine 189 are oxidised to a cystine. Residues 100-120 (QHLCFGVFITTEGFLLSVMAY) traverse the membrane as a helical segment. Residues 121–139 (DRYVAIVSPLLYTVAMSDR) lie on the Cytoplasmic side of the membrane. The helical transmembrane segment at 140-160 (KCVELVTGSWIGGIVNTLIHT) threads the bilayer. At 161–196 (ISLRRLSFCRLNAVSHFFCDIPSLLKLSCSDTSMNE) the chain is on the extracellular side. A helical membrane pass occupies residues 197 to 217 (LLLLTFSGVIAMATFLTVIIS). The Cytoplasmic portion of the chain corresponds to 218 to 237 (YIFIAFASLRIHSASGRQQA). Residues 238–258 (FSTCASHLTAVTIFYGTLIFS) form a helical membrane-spanning segment. Residues 259–271 (YIQPSSQYFVEQE) lie on the Extracellular side of the membrane. The chain crosses the membrane as a helical span at residues 272-292 (KVVSMFYTLGIPMLNLLIHSL). Residues 293 to 312 (RNKDVKEAVKRAIEMKHFLC) lie on the Cytoplasmic side of the membrane.

It belongs to the G-protein coupled receptor 1 family.

The protein localises to the cell membrane. Odorant receptor. This chain is Olfactory receptor 5J2 (OR5J2), found in Homo sapiens (Human).